Consider the following 459-residue polypeptide: Cyclic GMP-AMP synthase-like receptor 2 (459 aa).

Residues Ser68 and 79–81 each bind ATP; that span reads EFD. Residues Glu79, Asp81, and Asp199 each coordinate Mg(2+). Residues Asp199 and 248–255 contribute to the GTP site; that span reads RSSFYAVE. ATP is bound at residue 252–255; it reads YAVE. His263 is a binding site for Zn(2+). Residues Lys274 and 288–292 each bind ATP; that span reads SYYIK.

The protein belongs to the mab-21 family. It depends on Mg(2+) as a cofactor. Requires Mn(2+) as cofactor.

The enzyme catalyses GTP + ATP = 3',2'-cGAMP + 2 diphosphate. It carries out the reaction GTP + ATP = 2',3'-cGAMP + 2 diphosphate. The catalysed reaction is GTP + ATP = pppGp(2'-5')A + diphosphate. It catalyses the reaction pppA(2'-5')pG = 3',2'-cGAMP + diphosphate. The enzyme catalyses pppGp(2'-5')A = 2',3'-cGAMP + diphosphate. With respect to regulation, the enzyme activity is specifically activated by some nucleic acid. In terms of biological role, nucleotidyltransferase that catalyzes the formation of cyclic GMP-AMP from ATP and GTP and plays a key role in antiviral innate immunity. Directly binds some unknown nucleic acid, activating the nucleotidyltransferase activity, leading to synthesis of both 3',2'-cGAMP and 2',3'-cGAMP second messengers. 3',2'-cGAMP and 2',3'-cGAMP bind to and activate Sting, thereby triggering the antiviral immune response via activation of the NF-kappa-B transcription factor Rel (Relish). The chain is Cyclic GMP-AMP synthase-like receptor 2 from Drosophila melanogaster (Fruit fly).